Consider the following 259-residue polypeptide: Thiazole synthase (259 aa).

The Schiff-base intermediate with DXP role is filled by Lys-100. 1-deoxy-D-xylulose 5-phosphate is bound by residues Gly-161, Ala-187–Gly-188, and Asn-209–Thr-210.

The protein belongs to the ThiG family. As to quaternary structure, homotetramer. Forms heterodimers with either ThiH or ThiS.

Its subcellular location is the cytoplasm. The enzyme catalyses [ThiS sulfur-carrier protein]-C-terminal-Gly-aminoethanethioate + 2-iminoacetate + 1-deoxy-D-xylulose 5-phosphate = [ThiS sulfur-carrier protein]-C-terminal Gly-Gly + 2-[(2R,5Z)-2-carboxy-4-methylthiazol-5(2H)-ylidene]ethyl phosphate + 2 H2O + H(+). The protein operates within cofactor biosynthesis; thiamine diphosphate biosynthesis. In terms of biological role, catalyzes the rearrangement of 1-deoxy-D-xylulose 5-phosphate (DXP) to produce the thiazole phosphate moiety of thiamine. Sulfur is provided by the thiocarboxylate moiety of the carrier protein ThiS. In vitro, sulfur can be provided by H(2)S. In Methylobacillus flagellatus (strain ATCC 51484 / DSM 6875 / VKM B-1610 / KT), this protein is Thiazole synthase.